The sequence spans 96 residues: uncharacterized protein (96 aa).

It localises to the mitochondrion. This is an uncharacterized protein from Saccharomyces cerevisiae (strain ATCC 204508 / S288c) (Baker's yeast).